The sequence spans 238 residues: Riboflavin-binding protein (238 aa).

An N-terminal signal peptide occupies residues 1-17; that stretch reads MLRFAITLFAVITSSTC. The residue at position 18 (Q18) is a Pyrrolidone carboxylic acid. Cystine bridges form between C22/C49, C41/C90, C50/C94, C74/C155, C81/C127, C116/C186, C120/C169, C133/C151, and C184/C219. A glycan (N-linked (GlcNAc...) asparagine) is linked at N53. A glycan (N-linked (GlcNAc...) asparagine) is linked at N164. S204, S205, S208, S209, S210, S212, S213, and S214 each carry phosphoserine.

The protein belongs to the folate receptor family. Plasma and yolk RBPS have the same carbohydrate components, whereas egg-white RBP has a different, ovomucoid-type carbohydrate chain. In terms of processing, plasma RBP has the same C-terminal sequence as the egg-white RBP, which suggests that the C-terminal residues are cleaved off upon incorporation into the oocyte. As to expression, yolk RBP is synthesized in the liver; egg-white RBP is synthesized in the oviduct.

In terms of biological role, required for the transport of riboflavin to the developing oocyte. This Gallus gallus (Chicken) protein is Riboflavin-binding protein.